The primary structure comprises 171 residues: Endoribonuclease YbeY (171 aa).

3 residues coordinate Zn(2+): H126, H130, and H136.

Belongs to the endoribonuclease YbeY family. Zn(2+) serves as cofactor.

The protein resides in the cytoplasm. Single strand-specific metallo-endoribonuclease involved in late-stage 70S ribosome quality control and in maturation of the 3' terminus of the 16S rRNA. This chain is Endoribonuclease YbeY, found in Rhizobium johnstonii (strain DSM 114642 / LMG 32736 / 3841) (Rhizobium leguminosarum bv. viciae).